The sequence spans 393 residues: Phospholipase A1-II 1 (393 aa).

Positions 200–220 form a coiled coil; that stretch reads QVLNEIKRLQDMYEHEETSIT. Residue Ser225 is the Acyl-ester intermediate of the active site. Residues Ser225, Asp284, and His321 each act as charge relay system in the active site.

Belongs to the AB hydrolase superfamily. Lipase family.

It localises to the cytoplasm. Acylhydrolase that catalyzes the hydrolysis of phospholipids at the sn-1 position. The protein is Phospholipase A1-II 1 of Oryza sativa subsp. indica (Rice).